The primary structure comprises 343 residues: UPF0284 protein Msed_0735 (343 aa).

Belongs to the UPF0284 family.

In Metallosphaera sedula (strain ATCC 51363 / DSM 5348 / JCM 9185 / NBRC 15509 / TH2), this protein is UPF0284 protein Msed_0735.